Here is a 531-residue protein sequence, read N- to C-terminus: DnaJ homolog subfamily C member 21 (531 aa).

Residues 3–69 (CHYEALGVRR…QERAWYDNHR (67 aa)) enclose the J domain. Disordered stretches follow at residues 279 to 311 (FGDGSDENEMEEHELKDEEDGKDSDEAEDAELY), 327 to 474 (KAMK…VPAE), and 502 to 531 (KATGHARAPSSSSLNSATSSQSKKEKRKNR). Residues 281–311 (DGSDENEMEEHELKDEEDGKDSDEAEDAELY) are compositionally biased toward acidic residues. 2 positions are modified to phosphoserine: Ser-283 and Ser-302. The C2H2-type 1 zinc-finger motif lies at 314-338 (LYCPACDKSFKTEKAMKNHEKSKKH). Positions 364-375 (NPLDDNSEEEME) are enriched in acidic residues. Position 370 is a phosphoserine (Ser-370). A compositionally biased stretch (basic residues) spans 381-392 (KLSKKQKKKKQK). Polar residues predominate over residues 393-403 (PAQNYDDNFNV). Positions 442–453 (KPCDDPKSEAKS) are enriched in basic and acidic residues. The span at 455-464 (PKPKGKKTKD) shows a compositional bias: basic residues. The segment at 482–506 (ISCTTCHSEFPSRNKLFDHLKATGH) adopts a C2H2-type 2 zinc-finger fold. Ser-511 bears the Phosphoserine mark. Positions 511 to 522 (SSSSLNSATSSQ) are enriched in low complexity.

Interacts with HSPA8, PA2G4 and ZNF622. As to expression, expressed in brain, placenta, kidney and pancreas.

Its subcellular location is the cytoplasm. It localises to the nucleus. It is found in the nucleolus. Functionally, may act as a co-chaperone for HSP70. May play a role in ribosomal RNA (rRNA) biogenesis, possibly in the maturation of the 60S subunit. Binds the precursor 45S rRNA. The protein is DnaJ homolog subfamily C member 21 (DNAJC21) of Homo sapiens (Human).